Consider the following 119-residue polypeptide: Large ribosomal subunit protein bL20 (119 aa).

The protein belongs to the bacterial ribosomal protein bL20 family.

In terms of biological role, binds directly to 23S ribosomal RNA and is necessary for the in vitro assembly process of the 50S ribosomal subunit. It is not involved in the protein synthesizing functions of that subunit. The sequence is that of Large ribosomal subunit protein bL20 from Rhodopseudomonas palustris (strain BisA53).